The sequence spans 551 residues: Glucose-6-phosphate isomerase 2 (551 aa).

The Proton donor role is filled by glutamate 353. Catalysis depends on residues histidine 384 and lysine 512.

Belongs to the GPI family.

The protein resides in the cytoplasm. It catalyses the reaction alpha-D-glucose 6-phosphate = beta-D-fructose 6-phosphate. The protein operates within carbohydrate biosynthesis; gluconeogenesis. It participates in carbohydrate degradation; glycolysis; D-glyceraldehyde 3-phosphate and glycerone phosphate from D-glucose: step 2/4. Its function is as follows. Catalyzes the reversible isomerization of glucose-6-phosphate to fructose-6-phosphate. The sequence is that of Glucose-6-phosphate isomerase 2 from Colwellia psychrerythraea (strain 34H / ATCC BAA-681) (Vibrio psychroerythus).